Consider the following 396-residue polypeptide: Serpin-ZXA (396 aa).

Residues 343–367 (GTEAAAATAAVITLRSAPIAEDFVA) are RCL.

Belongs to the serpin family.

Probable serine protease inhibitor. This is Serpin-ZXA from Oryza sativa subsp. japonica (Rice).